Here is a 78-residue protein sequence, read N- to C-terminus: Small ribosomal subunit protein bS18 (78 aa).

This sequence belongs to the bacterial ribosomal protein bS18 family. As to quaternary structure, part of the 30S ribosomal subunit. Forms a tight heterodimer with protein bS6.

Functionally, binds as a heterodimer with protein bS6 to the central domain of the 16S rRNA, where it helps stabilize the platform of the 30S subunit. In Pediococcus pentosaceus (strain ATCC 25745 / CCUG 21536 / LMG 10740 / 183-1w), this protein is Small ribosomal subunit protein bS18.